The primary structure comprises 26 residues: Hemocyanin subunit B (26 aa).

Belongs to the tyrosinase family. Hemocyanin subfamily. As to expression, hemolymph.

It localises to the secreted. The protein resides in the extracellular space. Hemocyanins are copper-containing oxygen carriers occurring freely dissolved in the hemolymph of many mollusks and arthropods. The polypeptide is Hemocyanin subunit B (Carcinus maenas (Common shore crab)).